The following is a 180-amino-acid chain: Chromosome-anchoring protein RacA (180 aa).

Residues 5-25 constitute a DNA-binding region (H-T-H motif); it reads TPFIAKKLGVSPKAVVRIAQQ. The stretch at 89 to 151 forms a coiled coil; sequence SHDFEQLTAQ…LEATLKKEEP (63 aa).

The protein belongs to the RacA family.

The protein resides in the cytoplasm. In terms of biological role, required for the formation of axial filaments and for anchoring the origin regions at the cell poles in sporulating cells, thus ensuring proper chromosome segregation in the prespore. Binds in a dispersed manner throughout the chromosome but preferentially to sites clustered in the origin portion of the chromosome, causing condensation of the chromosome and its remodeling into an elongated, anchored structure. The chain is Chromosome-anchoring protein RacA from Bacillus cereus (strain ATCC 10987 / NRS 248).